Consider the following 375-residue polypeptide: tRNA-specific 2-thiouridylase MnmA (375 aa).

ATP-binding positions include 8 to 15 (GLSGGVDS) and Met34. The segment at 104 to 106 (NPD) is interaction with target base in tRNA. Cys109 functions as the Nucleophile in the catalytic mechanism. An intrachain disulfide couples Cys109 to Cys205. Gly133 contributes to the ATP binding site. The segment at 155 to 157 (KDQ) is interaction with tRNA. Cys205 (cysteine persulfide intermediate) is an active-site residue. Residues 313-314 (RY) are interaction with tRNA.

The protein belongs to the MnmA/TRMU family.

The protein resides in the cytoplasm. It carries out the reaction S-sulfanyl-L-cysteinyl-[protein] + uridine(34) in tRNA + AH2 + ATP = 2-thiouridine(34) in tRNA + L-cysteinyl-[protein] + A + AMP + diphosphate + H(+). Its function is as follows. Catalyzes the 2-thiolation of uridine at the wobble position (U34) of tRNA, leading to the formation of s(2)U34. The protein is tRNA-specific 2-thiouridylase MnmA of Acholeplasma laidlawii (strain PG-8A).